Reading from the N-terminus, the 155-residue chain is Acyl-CoA-binding domain-containing protein 3 (155 aa).

The ACB domain occupies 3 to 88; the sequence is LQEDFEEYAE…VKQLQEEAAA (86 aa). An acyl-CoA-binding positions include Lys-15, 30–34, Lys-56, and Tyr-75; that span reads YGLYK.

The protein belongs to the ACBP family. Highly expressed in leaves. Expressed at low levels in roots and seeds.

It is found in the cytoplasm. The protein localises to the cytosol. In terms of biological role, binds medium- and long-chain acyl-CoA esters with high affinity. Can interact in vitro with linolenoyl-CoA. Binds phosphatidic acid (PA) and phosphatidylcholine (PC) in vitro. May play a role in the biosynthesis of phospholipids. This chain is Acyl-CoA-binding domain-containing protein 3, found in Oryza sativa subsp. japonica (Rice).